A 379-amino-acid chain; its full sequence is tRNA-specific 2-thiouridylase MnmA (379 aa).

ATP-binding positions include alanine 6–serine 13 and leucine 32. Cysteine 101 serves as the catalytic Nucleophile. Cysteine 101 and cysteine 199 form a disulfide bridge. Glycine 125 is an ATP binding site. Positions lysine 148–glutamine 150 are interaction with tRNA. The active-site Cysteine persulfide intermediate is the cysteine 199.

It belongs to the MnmA/TRMU family.

Its subcellular location is the cytoplasm. It catalyses the reaction S-sulfanyl-L-cysteinyl-[protein] + uridine(34) in tRNA + AH2 + ATP = 2-thiouridine(34) in tRNA + L-cysteinyl-[protein] + A + AMP + diphosphate + H(+). Functionally, catalyzes the 2-thiolation of uridine at the wobble position (U34) of tRNA, leading to the formation of s(2)U34. The protein is tRNA-specific 2-thiouridylase MnmA of Arthrobacter sp. (strain FB24).